The primary structure comprises 948 residues: Coiled-coil domain-containing protein 66 (948 aa).

A phosphothreonine mark is found at T115 and T121. A Phosphoserine modification is found at S369. The segment at 458 to 499 is disordered; that stretch reads DRRRQKQLEHQKAITAQVEEKRRKKQLEEEQRKKEEQEEELR. The stretch at 467 to 558 forms a coiled coil; it reads HQKAITAQVE…EQRIRELAQK (92 aa). Positions 570–948 are mediates localization to cilia, centrosomes and spindle microtubules and the interaction with PCM1, CEP290, CEP104 and CSPP1; that stretch reads GVDTIQMEYN…NQEESFGSSF (379 aa). Phosphoserine is present on S606. 2 disordered regions span residues 690-713 and 788-808; these read QTKH…KRYI and SFSK…RTQQ.

As to quaternary structure, homodimer; disulfide-linked. Interacts with CEP290. Interacts with PCM1. Interacts with ARMC9, TOGARAM1, CSPP1 and CEP104. Interacts with CDK5RAP2, CEP152, CEP192, TBG1 and PRC1. In terms of tissue distribution, widely expressed (at protein level). Expressed in retina, mainly in photoreceptors but also in outer plexiform and ganglion cell layers (at protein level).

The protein localises to the cytoplasm. It is found in the cytoskeleton. It localises to the microtubule organizing center. Its subcellular location is the centrosome. The protein resides in the centriolar satellite. The protein localises to the cell projection. It is found in the cilium. It localises to the cilium basal body. Its subcellular location is the cilium axoneme. The protein resides in the photoreceptor inner segment. The protein localises to the photoreceptor outer segment. It is found in the spindle. It localises to the midbody. Its function is as follows. Microtubule-binding protein required for ciliogenesis. May function in ciliogenesis by mediating the transport of proteins like BBS4 to the cilium, but also through the organization of the centriolar satellites. Required for the assembly of signaling-competent cilia with proper structure and length. Mediates this function in part by regulating transition zone assembly and basal body recruitment of the IFT-B complex. Cooperates with the ciliopathy proteins CSPP1 and CEP104 during cilium length regulation. Plays two important roles during cell division. First, is required for mitotic progression via regulation of spindle assembly, organization and orientation, levels of spindle microtubules (MTs), kinetochore-fiber integrity, and chromosome alignment. Second, functions during cytokinesis in part by regulating assembly and organization of central spindle and midbody MTs. Plays a role in retina morphogenesis and/or homeostasis. This chain is Coiled-coil domain-containing protein 66, found in Homo sapiens (Human).